The sequence spans 187 residues: 2-oxoglutarate synthase subunit KorC (187 aa).

Heterotetramer of the KorA, KorB, KorC and KorD subunits.

It catalyses the reaction 2 oxidized [2Fe-2S]-[ferredoxin] + 2-oxoglutarate + CoA = succinyl-CoA + 2 reduced [2Fe-2S]-[ferredoxin] + CO2 + H(+). This is 2-oxoglutarate synthase subunit KorC (korC) from Methanocaldococcus jannaschii (strain ATCC 43067 / DSM 2661 / JAL-1 / JCM 10045 / NBRC 100440) (Methanococcus jannaschii).